Reading from the N-terminus, the 877-residue chain is Potassium transporter 23 (877 aa).

Disordered regions lie at residues 1–60 (MDDD…SLDG) and 72–92 (ASAGGASGGGGGGGPLSRASS). At 1 to 126 (MDDDDSGIQE…RGAHGHSSKE (126 aa)) the chain is on the cytoplasmic side. Residues 12–28 (PAPPPPPPPPPPPPPPL) are compositionally biased toward pro residues. Positions 76–86 (GASGGGGGGGP) are enriched in gly residues. Residues 127–147 (ISMLSTVAMAFQTLGVVYGDM) form a helical membrane-spanning segment. The Extracellular portion of the chain corresponds to 148 to 173 (GTSPLYVFSDVFSKVPIKSEVEILGA). Residues 174 to 194 (LSLVMYTIALIPFAKYVFIVL) traverse the membrane as a helical segment. The Cytoplasmic portion of the chain corresponds to 195 to 260 (KANDNGEGGT…SLEKNPVFKN (66 aa)). Residues 261-281 (ILLFLVLMGTSMVIGDGILTP) traverse the membrane as a helical segment. The Extracellular segment spans residues 282 to 295 (SMSVMSAVSGLQGR). A helical transmembrane segment spans residues 296–316 (VPGFGTDAVVIVSILFLVLLF). Over 317–325 (SVQRFGTGK) the chain is Cytoplasmic. The helical transmembrane segment at 326–346 (VGFMFAPILALWFINLGTIGI) threads the bilayer. At 347 to 379 (YNLAKYDISVVRAFNPVYIYLFFQTNGIKAWSA) the chain is on the extracellular side. Residues 380 to 400 (LGGCVLCITGAEAMFADLGHF) traverse the membrane as a helical segment. The Cytoplasmic portion of the chain corresponds to 401-406 (SVKSIQ). Residues 407-427 (VAFTAVVFPCLLIAYMGQAAY) form a helical membrane-spanning segment. The Extracellular portion of the chain corresponds to 428–441 (LMKYPFAVERIFYD). A helical membrane pass occupies residues 442-462 (SVPEILFWPVFVIATLAAMIA). Residues 463-498 (SQAMISATFSCIKQAMALGCFPRIKIIHTSKKVMGQ) lie on the Cytoplasmic side of the membrane. A helical membrane pass occupies residues 499–519 (IYIPVMNWFLMVMCIIIVATF). Residues 520–524 (RSTND) lie on the Extracellular side of the membrane. The chain crosses the membrane as a helical span at residues 525-545 (IANAYGIAEVGVMMVSTALVT). Residues 546-555 (LVMLLIWQTN) are Cytoplasmic-facing. A helical membrane pass occupies residues 556-578 (LFLVMCFPVIFGSVEFVYLTAVL). At 579-583 (SKIQE) the chain is on the extracellular side. A helical transmembrane segment spans residues 584–604 (GGWLPLAFSSLFLCIMYTWNY). Residues 605-877 (GSVLKYQSEM…IMRVGMTYMV (273 aa)) lie on the Cytoplasmic side of the membrane.

It belongs to the HAK/KUP transporter (TC 2.A.72.3) family.

It localises to the membrane. Its function is as follows. High-affinity potassium transporter. The sequence is that of Potassium transporter 23 (HAK23) from Oryza sativa subsp. japonica (Rice).